We begin with the raw amino-acid sequence, 77 residues long: uncharacterized protein (77 aa).

This is an uncharacterized protein from Saccharomyces cerevisiae (strain ATCC 204508 / S288c) (Baker's yeast).